The chain runs to 413 residues: Multidrug resistance protein MdtA (413 aa).

A signal peptide spans 1–20 (MKGSNTFRWAIAIGVVVAAA). 2 disordered regions span residues 31–57 (SPTAAPGVAAQAQHTAAAGRRGMRDGP) and 391–413 (EPQTTMADEKSPSRHEGQKGARA). The segment covering 32-49 (PTAAPGVAAQAQHTAAAG) has biased composition (low complexity). A compositionally biased stretch (basic and acidic residues) spans 397–413 (ADEKSPSRHEGQKGARA).

The protein belongs to the membrane fusion protein (MFP) (TC 8.A.1) family. In terms of assembly, part of a tripartite efflux system composed of MdtA, MdtB and MdtC.

The protein localises to the cell inner membrane. The chain is Multidrug resistance protein MdtA from Salmonella typhi.